The chain runs to 140 residues: Auxin-responsive protein IAA26 (140 aa).

Positions 1–40 are disordered; sequence MASYGDDGVELTELTLGPPGASARRARRGRKNGHPPPSSS. The EAR-like (transcriptional repression) signature appears at 14-18; that stretch reads LTLGP. A compositionally biased stretch (basic residues) spans 24–33; sequence RRARRGRKNG. The 86-residue stretch at 45 to 130 folds into the PB1 domain; it reads AYFVKVSMDG…SCKRMRVMRA (86 aa).

Belongs to the Aux/IAA family. Homodimers and heterodimers. In terms of tissue distribution, expressed in roots, seedlings and flowers.

It localises to the nucleus. Its function is as follows. Aux/IAA proteins are short-lived transcriptional factors that function as repressors of early auxin response genes at low auxin concentrations. This Oryza sativa subsp. japonica (Rice) protein is Auxin-responsive protein IAA26 (IAA26).